Here is a 488-residue protein sequence, read N- to C-terminus: 3-octaprenyl-4-hydroxybenzoate carboxy-lyase (488 aa).

Asn-172 is a binding site for Mn(2+). Residues 175–177, 189–191, and 194–195 each bind prenylated FMN; these read IYR, RWL, and RG. Glu-238 contributes to the Mn(2+) binding site. The active-site Proton donor is Asp-287.

Belongs to the UbiD family. As to quaternary structure, homohexamer. Prenylated FMN is required as a cofactor. Mn(2+) serves as cofactor.

The protein resides in the cell membrane. The enzyme catalyses a 4-hydroxy-3-(all-trans-polyprenyl)benzoate + H(+) = a 2-(all-trans-polyprenyl)phenol + CO2. It participates in cofactor biosynthesis; ubiquinone biosynthesis. In terms of biological role, catalyzes the decarboxylation of 3-octaprenyl-4-hydroxy benzoate to 2-octaprenylphenol, an intermediate step in ubiquinone biosynthesis. This is 3-octaprenyl-4-hydroxybenzoate carboxy-lyase from Legionella pneumophila (strain Paris).